Reading from the N-terminus, the 194-residue chain is Imidazoleglycerol-phosphate dehydratase (194 aa).

This sequence belongs to the imidazoleglycerol-phosphate dehydratase family.

It localises to the cytoplasm. The catalysed reaction is D-erythro-1-(imidazol-4-yl)glycerol 3-phosphate = 3-(imidazol-4-yl)-2-oxopropyl phosphate + H2O. It functions in the pathway amino-acid biosynthesis; L-histidine biosynthesis; L-histidine from 5-phospho-alpha-D-ribose 1-diphosphate: step 6/9. This is Imidazoleglycerol-phosphate dehydratase from Thermoanaerobacter sp. (strain X514).